Reading from the N-terminus, the 561-residue chain is Putative transport protein YbjL (561 aa).

5 helical membrane-spanning segments follow: residues 8–28, 32–52, 66–86, 94–114, and 158–178; these read LLNG…LCLG, LGSI…LLGQ, FMLF…SIFF, MLAL…GKLF, and NLSL…IVGA. 2 RCK C-terminal domains span residues 200–288 and 292–373; these read RGLD…SFRN and VFDR…RIGF. 6 helical membrane-spanning segments follow: residues 383 to 403, 406 to 426, 451 to 471, 475 to 495, 503 to 523, and 540 to 560; these read LLAF…TFQF, FSFG…LGFM, VFMA…LGAI, MLIA…LFGA, ALLF…EIIS, and AIAN…CPGL.

The protein belongs to the AAE transporter (TC 2.A.81) family. YbjL subfamily.

The protein localises to the cell membrane. This chain is Putative transport protein YbjL, found in Shigella dysenteriae serotype 1 (strain Sd197).